Consider the following 252-residue polypeptide: Chitooligosaccharide deacetylase (252 aa).

2 residues coordinate Mg(2+): His-61 and His-125.

It belongs to the YdjC deacetylase family. ChbG subfamily. In terms of assembly, homodimer. It depends on Mg(2+) as a cofactor.

It is found in the cytoplasm. It carries out the reaction N,N'-diacetylchitobiose + H2O = N-acetyl-beta-D-glucosaminyl-(1-&gt;4)-D-glucosamine + acetate. It catalyses the reaction diacetylchitobiose-6'-phosphate + H2O = N'-monoacetylchitobiose-6'-phosphate + acetate. The protein operates within glycan degradation; chitin degradation. In terms of biological role, involved in the degradation of chitin. ChbG is essential for growth on the acetylated chitooligosaccharides chitobiose and chitotriose but is dispensable for growth on cellobiose and chitosan dimer, the deacetylated form of chitobiose. Deacetylation of chitobiose-6-P and chitotriose-6-P is necessary for both the activation of the chb promoter by the regulatory protein ChbR and the hydrolysis of phosphorylated beta-glucosides by the phospho-beta-glucosidase ChbF. Catalyzes the removal of only one acetyl group from chitobiose-6-P to yield monoacetylchitobiose-6-P, the inducer of ChbR and the substrate of ChbF. The protein is Chitooligosaccharide deacetylase of Shigella flexneri serotype 5b (strain 8401).